We begin with the raw amino-acid sequence, 353 residues long: N-formyl peptide receptor 3 (353 aa).

Over 1–27 the chain is Extracellular; that stretch reads METNFSIPLNETEEVLPEPAGHTVLWI. 2 N-linked (GlcNAc...) asparagine glycosylation sites follow: asparagine 4 and asparagine 10. A helical membrane pass occupies residues 28–50; that stretch reads FSLLVHGVTFVFGVLGNGLVIWV. The Cytoplasmic segment spans residues 51–61; that stretch reads AGFRMTRTVNT. A helical transmembrane segment spans residues 62–83; it reads ICYLNLALADFSFSAILPFRMV. Topologically, residues 84 to 100 are extracellular; the sequence is SVAMREKWPFGSFLCKL. A disulfide bond links cysteine 98 and cysteine 176. A helical membrane pass occupies residues 101 to 121; the sequence is VHVMIDINLFVSVYLITIIAL. Residues 122–140 lie on the Cytoplasmic side of the membrane; it reads DRCICVLHPAWAQNHRTMS. A helical transmembrane segment spans residues 141-162; sequence LAKRVMTGLWIFTIVLTLPNFI. The Extracellular segment spans residues 163-205; that stretch reads FWTTISTTNGDTYCIFNFAFWGDTAVERLNVFITMAKVFLILH. Residues 206–226 form a helical membrane-spanning segment; sequence FIIGFSVPMSIITVCYGIIAA. Over 227–242 the chain is Cytoplasmic; it reads KIHRNHMIKSSRPLRV. The chain crosses the membrane as a helical span at residues 243-266; that stretch reads FAAVVASFFICWFPYELIGILMAV. Residues 267 to 286 are Extracellular-facing; it reads WLKEMLLNGKYKIILVLINP. A helical transmembrane segment spans residues 287-306; that stretch reads TSSLAFFNSCLNPILYVFMG. Topologically, residues 307 to 353 are cytoplasmic; sequence RNFQERLIRSLPTSLERALTEVPDSAQTSNTDTTSASPPEETELQAM. The segment at 327–353 is disordered; the sequence is EVPDSAQTSNTDTTSASPPEETELQAM. Residues 331 to 343 show a composition bias toward polar residues; it reads SAQTSNTDTTSAS.

The protein belongs to the G-protein coupled receptor 1 family. Detected in various tissues with highest expression in lung.

Its subcellular location is the cell membrane. Functionally, low affinity receptor for N-formyl-methionyl peptides, which are powerful neutrophils chemotactic factors. Binding of FMLP to the receptor causes activation of neutrophils. This response is mediated via a G-protein that activates a phosphatidylinositol-calcium second messenger system. Acts as a receptor for humanin. This Homo sapiens (Human) protein is N-formyl peptide receptor 3 (FPR3).